The chain runs to 958 residues: Structure-specific endonuclease subunit SLX4 (958 aa).

Disordered stretches follow at residues 89–123 (AESPIKSGVEGPTLPLGGDKKKPRTAGARKKKGKT), 183–209 (QKKAETVSRHFTPHTSAPPELVAGPID), 326–400 (LATA…LSPT), 531–589 (DLTI…EQHQ), 594–613 (QSNTPQQPQPAPPPPPSFEL), and 655–849 (STAA…SPPA). The span at 109 to 121 (KKPRTAGARKKKG) shows a compositional bias: basic residues. Over residues 332-341 (RRPEEAERST) the composition is skewed to basic and acidic residues. A compositionally biased stretch (polar residues) spans 342–351 (LSRQQDTHIP). Low complexity predominate over residues 364–373 (AASKSASAKP). Over residues 374–389 (KAAKKAPKPRATKKKQ) the composition is skewed to basic residues. Pro residues predominate over residues 600–610 (QPQPAPPPPPS). Composition is skewed to low complexity over residues 655-666 (STAAQAAMSTSA), 775-787 (TTSPATRATRAKA), and 821-838 (PDSGSDDPFASSAPSSPD).

The protein belongs to the SLX4 family. In terms of assembly, forms a heterodimer with SLX1. Post-translationally, phosphorylated in response to DNA damage.

It localises to the nucleus. Its function is as follows. Regulatory subunit of the SLX1-SLX4 structure-specific endonuclease that resolves DNA secondary structures generated during DNA repair and recombination. Has endonuclease activity towards branched DNA substrates, introducing single-strand cuts in duplex DNA close to junctions with ss-DNA. This Chaetomium globosum (strain ATCC 6205 / CBS 148.51 / DSM 1962 / NBRC 6347 / NRRL 1970) (Soil fungus) protein is Structure-specific endonuclease subunit SLX4.